We begin with the raw amino-acid sequence, 345 residues long: Phosphate acyltransferase (345 aa).

The protein belongs to the PlsX family. Homodimer. Probably interacts with PlsY.

Its subcellular location is the cytoplasm. The enzyme catalyses a fatty acyl-[ACP] + phosphate = an acyl phosphate + holo-[ACP]. It functions in the pathway lipid metabolism; phospholipid metabolism. Functionally, catalyzes the reversible formation of acyl-phosphate (acyl-PO(4)) from acyl-[acyl-carrier-protein] (acyl-ACP). This enzyme utilizes acyl-ACP as fatty acyl donor, but not acyl-CoA. The chain is Phosphate acyltransferase from Photorhabdus laumondii subsp. laumondii (strain DSM 15139 / CIP 105565 / TT01) (Photorhabdus luminescens subsp. laumondii).